We begin with the raw amino-acid sequence, 130 residues long: Small ribosomal subunit protein uS9 (130 aa).

Belongs to the universal ribosomal protein uS9 family.

The chain is Small ribosomal subunit protein uS9 from Geotalea uraniireducens (strain Rf4) (Geobacter uraniireducens).